A 397-amino-acid polypeptide reads, in one-letter code: Digeranylgeranylglycerophospholipid reductase (397 aa).

FAD contacts are provided by alanine 15, glutamate 34, cysteine 45, glycine 46, glycine 48, arginine 101, alanine 125, glutamate 163, aspartate 284, glycine 296, and isoleucine 297. A 2,3-bis-O-(geranylgeranyl)-sn-glycerol 1-phospholipid is bound by residues lysine 339 and valine 375.

The protein belongs to the geranylgeranyl reductase family. DGGGPL reductase subfamily. The cofactor is FAD.

The catalysed reaction is 2,3-bis-O-(phytanyl)-sn-glycerol 1-phosphate + 8 NADP(+) = 2,3-bis-O-(geranylgeranyl)-sn-glycerol 1-phosphate + 8 NADPH + 8 H(+). It carries out the reaction 2,3-bis-O-(phytanyl)-sn-glycerol 1-phosphate + 8 NAD(+) = 2,3-bis-O-(geranylgeranyl)-sn-glycerol 1-phosphate + 8 NADH + 8 H(+). The enzyme catalyses a 2,3-bis-O-phytanyl-sn-glycerol 1-phospholipid + 8 A = a 2,3-bis-O-(geranylgeranyl)-sn-glycerol 1-phospholipid + 8 AH2. It catalyses the reaction CDP-2,3-bis-O-(geranylgeranyl)-sn-glycerol + 8 AH2 = CDP-2,3-bis-O-(phytanyl)-sn-glycerol + 8 A. The catalysed reaction is archaetidylserine + 8 AH2 = 2,3-bis-O-phytanyl-sn-glycero-3-phospho-L-serine + 8 A. It participates in membrane lipid metabolism; glycerophospholipid metabolism. Is involved in the reduction of 2,3-digeranylgeranylglycerophospholipids (unsaturated archaeols) into 2,3-diphytanylglycerophospholipids (saturated archaeols) in the biosynthesis of archaeal membrane lipids. Catalyzes the formation of archaetidic acid (2,3-di-O-phytanyl-sn-glyceryl phosphate) from 2,3-di-O-geranylgeranylglyceryl phosphate (DGGGP) via the hydrogenation of each double bond of the isoprenoid chains. Is also probably able to reduce double bonds of geranyl groups in CDP-2,3-bis-O-(geranylgeranyl)-sn-glycerol and archaetidylserine, thus acting at various stages in the biosynthesis of archaeal membrane lipids. In Picrophilus torridus (strain ATCC 700027 / DSM 9790 / JCM 10055 / NBRC 100828 / KAW 2/3), this protein is Digeranylgeranylglycerophospholipid reductase.